The primary structure comprises 357 residues: Histidine biosynthesis bifunctional protein HisB (357 aa).

Residues 1–167 (MNDKILFIDR…IHKYLMQNSH (167 aa)) are histidinol-phosphatase. The active-site Nucleophile is the D9. Positions 9 and 11 each coordinate Mg(2+). D11 functions as the Proton donor in the catalytic mechanism. Zn(2+)-binding residues include C93, H95, C101, and C103. Residue D130 participates in Mg(2+) binding. The tract at residues 168 to 357 (RVAHIQRITN…QIPSSKGILL (190 aa)) is imidazoleglycerol-phosphate dehydratase.

In the N-terminal section; belongs to the histidinol-phosphatase family. The protein in the C-terminal section; belongs to the imidazoleglycerol-phosphate dehydratase family. It depends on Mg(2+) as a cofactor. The cofactor is Zn(2+).

It localises to the cytoplasm. It carries out the reaction D-erythro-1-(imidazol-4-yl)glycerol 3-phosphate = 3-(imidazol-4-yl)-2-oxopropyl phosphate + H2O. The enzyme catalyses L-histidinol phosphate + H2O = L-histidinol + phosphate. It functions in the pathway amino-acid biosynthesis; L-histidine biosynthesis; L-histidine from 5-phospho-alpha-D-ribose 1-diphosphate: step 6/9. It participates in amino-acid biosynthesis; L-histidine biosynthesis; L-histidine from 5-phospho-alpha-D-ribose 1-diphosphate: step 8/9. The chain is Histidine biosynthesis bifunctional protein HisB from Blochmanniella floridana.